The primary structure comprises 159 residues: Transmembrane protein 42 (159 aa).

Helical transmembrane passes span 37-57 (FWGV…AASA), 59-79 (LAFG…VMAS), 100-120 (IASV…GYVL), and 124-144 (CQEV…TLIH).

It is found in the membrane. The protein is Transmembrane protein 42 (TMEM42) of Homo sapiens (Human).